The primary structure comprises 438 residues: Leupeptin-inactivating enzyme 1 (438 aa).

The first 37 residues, 1–37 (MSLSVSRRLAAVTAFAVAGLFASAVPAALAAPSAVAA), serve as a signal peptide directing secretion. Zn(2+) is bound by residues His-125 and Asp-137. Residue Glu-171 is the Proton acceptor of the active site. Positions 172, 200, and 287 each coordinate Zn(2+). Residues Cys-285 and Cys-290 are joined by a disulfide bond. A P/Homo B domain is found at 321-438 (VPPGQSFENT…GYINSWKITF (118 aa)).

This sequence belongs to the peptidase M28 family. M28A subfamily. Monomer. Zn(2+) is required as a cofactor.

It localises to the secreted. With respect to regulation, activity is inhibited by metalloprotease inhibitors and activated by Mg(2+) and Ca(2+). A leucine-specific metalloprotease that plays a role in controlling the amount of leupeptin during colony development. Degrades leupeptin into three components, acetyl-leucine, leucine and argininal. Has a strict preference for leucine at the P1 site. The sequence is that of Leupeptin-inactivating enzyme 1 (lieA) from Streptomyces exfoliatus (Streptomyces hydrogenans).